A 158-amino-acid chain; its full sequence is 18.1 kDa class I heat shock protein (158 aa).

Positions 44–158 constitute a sHSP domain; the sequence is ENPAFVSTRV…AEVKSIEISG (115 aa).

This sequence belongs to the small heat shock protein (HSP20) family. Forms oligomeric structures.

It is found in the cytoplasm. This Pisum sativum (Garden pea) protein is 18.1 kDa class I heat shock protein (HSP18.1).